A 277-amino-acid chain; its full sequence is Tryptophan synthase alpha chain (277 aa).

Active-site proton acceptor residues include Glu59 and Asp70.

This sequence belongs to the TrpA family. In terms of assembly, tetramer of two alpha and two beta chains.

It catalyses the reaction (1S,2R)-1-C-(indol-3-yl)glycerol 3-phosphate + L-serine = D-glyceraldehyde 3-phosphate + L-tryptophan + H2O. It functions in the pathway amino-acid biosynthesis; L-tryptophan biosynthesis; L-tryptophan from chorismate: step 5/5. In terms of biological role, the alpha subunit is responsible for the aldol cleavage of indoleglycerol phosphate to indole and glyceraldehyde 3-phosphate. This is Tryptophan synthase alpha chain from Streptomyces avermitilis (strain ATCC 31267 / DSM 46492 / JCM 5070 / NBRC 14893 / NCIMB 12804 / NRRL 8165 / MA-4680).